The primary structure comprises 186 residues: Probable RNA 2'-phosphotransferase (186 aa).

Belongs to the KptA/TPT1 family.

In terms of biological role, removes the 2'-phosphate from RNA via an intermediate in which the phosphate is ADP-ribosylated by NAD followed by a presumed transesterification to release the RNA and generate ADP-ribose 1''-2''-cyclic phosphate (APPR&gt;P). May function as an ADP-ribosylase. The polypeptide is Probable RNA 2'-phosphotransferase (Pectobacterium carotovorum subsp. carotovorum (strain PC1)).